The chain runs to 198 residues: Leucine-rich melanocyte differentiation-associated protein (198 aa).

LRR repeat units lie at residues Glu2–Ser22, Ser26–Pro47, Arg48–Leu69, and Ala75–Glu95. The LRRCT domain maps to Lys96 to Arg134.

In terms of tissue distribution, in the embryo, expressed in melanoblasts. In the fetus, expressed in melanocytes. Not detected in retinal pigment epithelial cells.

Its function is as follows. Required for melanocyte differentiation. The sequence is that of Leucine-rich melanocyte differentiation-associated protein from Homo sapiens (Human).